Here is a 257-residue protein sequence, read N- to C-terminus: Snake venom serine protease KN10 (257 aa).

The first 18 residues, 1–18 (MVLIRVLANLLILQLSYA), serve as a signal peptide directing secretion. The propeptide occupies 19-24 (QKSSEL). The region spanning 25-248 (VVGGDECNIN…HLDWIKSIIA (224 aa)) is the Peptidase S1 domain. Cystine bridges form between cysteine 31–cysteine 162, cysteine 49–cysteine 65, cysteine 141–cysteine 209, cysteine 173–cysteine 188, and cysteine 199–cysteine 224. Catalysis depends on histidine 64, which acts as the Charge relay system. Asparagine 102 carries an N-linked (GlcNAc...) asparagine glycan. Aspartate 109 acts as the Charge relay system in catalysis. Residues asparagine 120 and asparagine 121 are each glycosylated (N-linked (GlcNAc...) asparagine). The active-site Charge relay system is the serine 203.

This sequence belongs to the peptidase S1 family. Snake venom subfamily. Monomer. As to expression, expressed by the venom gland.

It localises to the secreted. Functionally, snake venom serine protease that may act in the hemostasis system of the prey. This is Snake venom serine protease KN10 from Trimeresurus stejnegeri (Chinese green tree viper).